The following is a 346-amino-acid chain: N-acetyl-gamma-glutamyl-phosphate reductase (346 aa).

The active site involves C150.

The protein belongs to the NAGSA dehydrogenase family. Type 1 subfamily.

Its subcellular location is the cytoplasm. The enzyme catalyses N-acetyl-L-glutamate 5-semialdehyde + phosphate + NADP(+) = N-acetyl-L-glutamyl 5-phosphate + NADPH + H(+). Its pathway is amino-acid biosynthesis; L-arginine biosynthesis; N(2)-acetyl-L-ornithine from L-glutamate: step 3/4. In terms of biological role, catalyzes the NADPH-dependent reduction of N-acetyl-5-glutamyl phosphate to yield N-acetyl-L-glutamate 5-semialdehyde. The chain is N-acetyl-gamma-glutamyl-phosphate reductase from Alkaliphilus metalliredigens (strain QYMF).